The following is a 492-amino-acid chain: RNase aCSPSF2 (492 aa).

His-130, His-132, Asp-134, His-135, His-213, Asp-234, and His-460 together coordinate a divalent metal cation.

Belongs to the metallo-beta-lactamase superfamily. RNA-metabolizing metallo-beta-lactamase-like family. The cofactor is Mg(2+).

In terms of biological role, a 5'-3' exoribonuclease, more active on 5'-monophosphorylated and 5'-hydroxylated RNA than 5'-tri-phosphorylated RNA; note there is no evidence for accumulation of 5'-monophosphorylated RNA in this organism. Translation initiation factor 2 subunit gamma but not subunit alpha protects 5'-tri-phosphorylated RNA from degradation by this enzyme. This chain is RNase aCSPSF2, found in Saccharolobus solfataricus (strain ATCC 35092 / DSM 1617 / JCM 11322 / P2) (Sulfolobus solfataricus).